The following is a 108-amino-acid chain: UPF0102 protein Sfri_0388 (108 aa).

The protein belongs to the UPF0102 family.

The sequence is that of UPF0102 protein Sfri_0388 from Shewanella frigidimarina (strain NCIMB 400).